The chain runs to 82 residues: Delta-actitoxin-Aeq2b 2 (82 aa).

An N-terminal signal peptide occupies residues 1–19 (MNRLMILVFAAVFLALASA). A propeptide spanning residues 20 to 26 (DEDVDIA) is cleaved from the precursor. Disulfide bonds link Cys-32–Cys-79, Cys-34–Cys-69, and Cys-62–Cys-80.

It belongs to the sea anemone sodium channel inhibitory toxin family. Type I subfamily.

It localises to the secreted. The protein resides in the nematocyst. Functionally, binds specifically to voltage-gated sodium channels (Nav), thereby delaying their inactivation during signal transduction. Causes death to crabs. The protein is Delta-actitoxin-Aeq2b 2 of Actinia equina (Beadlet anemone).